The primary structure comprises 466 residues: Probable agmatine/putrescine antiporter AguD (466 aa).

12 helical membrane-spanning segments follow: residues 8 to 28 (FSLFSAILSVICVVFVAEAAA), 30 to 50 (VAAIGNSQFFWWIVLIVAFLL), 85 to 105 (ASWFYWVNFPLWMASLAVLCP), 120 to 140 (ISLLIELIFIWVIVLISLYPV), 144 to 164 (VWILNGGAVIKVFLALALGGL), 192 to 212 (LSFISVIIFNLLGFEVICTFA), 226 to 246 (IIIGGIVIAAIYMFSAFGIGV), 273 to 293 (WFISLIAFLFMLTLVGNMVSW), 325 to 345 (WGAALMNGIVATFIVVIAPLL), 350 to 370 (LFWSFFSLNLVLFLLSYIPVF), 398 to 418 (VYMALPMIIIIISLIFTAIPL), and 426 to 446 (TEQLPITIGAIIFIVIGELII).

Belongs to the amino acid-polyamine-organocation (APC) superfamily. Glutamate:GABA antiporter (GGA) (TC 2.A.3.7) family.

Its subcellular location is the cell membrane. Its function is as follows. Probably catalyzes agmatine/putrescine exchange. The protein is Probable agmatine/putrescine antiporter AguD of Lactococcus lactis subsp. lactis (strain IL1403) (Streptococcus lactis).